The primary structure comprises 729 residues: Fatty acid oxidation complex subunit alpha (729 aa).

The interval 1–189 (MLYKGDTLYL…KIGLVDGVVK (189 aa)) is enoyl-CoA hydratase/isomerase. Substrate is bound at residue Asp-296. The 3-hydroxyacyl-CoA dehydrogenase stretch occupies residues 311 to 729 (ETPKQAAVLG…ARPVGSLKTA (419 aa)). Residues Met-324, Asp-343, 400–402 (VVE), Lys-407, and Ser-429 each bind NAD(+). Residue His-450 is the For 3-hydroxyacyl-CoA dehydrogenase activity of the active site. Asn-453 serves as a coordination point for NAD(+). 2 residues coordinate substrate: Asn-500 and Tyr-660. The disordered stretch occupies residues 707-729 (TRHNEPYYPPVEPARPVGSLKTA).

The protein in the N-terminal section; belongs to the enoyl-CoA hydratase/isomerase family. In the C-terminal section; belongs to the 3-hydroxyacyl-CoA dehydrogenase family. Heterotetramer of two alpha chains (FadB) and two beta chains (FadA).

The catalysed reaction is a (3S)-3-hydroxyacyl-CoA + NAD(+) = a 3-oxoacyl-CoA + NADH + H(+). It catalyses the reaction a (3S)-3-hydroxyacyl-CoA = a (2E)-enoyl-CoA + H2O. The enzyme catalyses a 4-saturated-(3S)-3-hydroxyacyl-CoA = a (3E)-enoyl-CoA + H2O. It carries out the reaction (3S)-3-hydroxybutanoyl-CoA = (3R)-3-hydroxybutanoyl-CoA. The catalysed reaction is a (3Z)-enoyl-CoA = a 4-saturated (2E)-enoyl-CoA. It catalyses the reaction a (3E)-enoyl-CoA = a 4-saturated (2E)-enoyl-CoA. It participates in lipid metabolism; fatty acid beta-oxidation. Functionally, involved in the aerobic and anaerobic degradation of long-chain fatty acids via beta-oxidation cycle. Catalyzes the formation of 3-oxoacyl-CoA from enoyl-CoA via L-3-hydroxyacyl-CoA. It can also use D-3-hydroxyacyl-CoA and cis-3-enoyl-CoA as substrate. The chain is Fatty acid oxidation complex subunit alpha from Salmonella typhi.